A 363-amino-acid polypeptide reads, in one-letter code: Phospho-N-acetylmuramoyl-pentapeptide-transferase (363 aa).

Helical transmembrane passes span 13–33, 49–69, 95–115, 119–139, 154–174, 183–203, 224–244, 281–301, and 343–363; these read ISGIALASLLAVGLGTTAFFL, LPLLLCAMGSGVVGFWVIPLL, MGGIFFIPVGVIIACILSNFA, LAVSALTTSYGFIGWLDDWQI, LALQVGFAAVFCLWLMFNQPS, WVSFTLPLGFLFWPLAGFVLV, AIALLALGALIAPTAPGLMVF, AVALLTNTLVALFILSGIFFV, and ELQVVGVFYVIAAILAAICLA.

Belongs to the glycosyltransferase 4 family. MraY subfamily. Mg(2+) serves as cofactor.

The protein resides in the cell inner membrane. The enzyme catalyses UDP-N-acetyl-alpha-D-muramoyl-L-alanyl-gamma-D-glutamyl-meso-2,6-diaminopimeloyl-D-alanyl-D-alanine + di-trans,octa-cis-undecaprenyl phosphate = di-trans,octa-cis-undecaprenyl diphospho-N-acetyl-alpha-D-muramoyl-L-alanyl-D-glutamyl-meso-2,6-diaminopimeloyl-D-alanyl-D-alanine + UMP. It participates in cell wall biogenesis; peptidoglycan biosynthesis. Functionally, catalyzes the initial step of the lipid cycle reactions in the biosynthesis of the cell wall peptidoglycan: transfers peptidoglycan precursor phospho-MurNAc-pentapeptide from UDP-MurNAc-pentapeptide onto the lipid carrier undecaprenyl phosphate, yielding undecaprenyl-pyrophosphoryl-MurNAc-pentapeptide, known as lipid I. The polypeptide is Phospho-N-acetylmuramoyl-pentapeptide-transferase (Nostoc punctiforme (strain ATCC 29133 / PCC 73102)).